The sequence spans 405 residues: Aspartokinase (405 aa).

Residue 7–10 coordinates ATP; it reads KYGG. Position 25 to 30 (25 to 30) interacts with substrate; it reads RIAHYR. Residue Ser41 participates in ATP binding. Substrate is bound by residues 47-49, Glu74, 125-126, 150-153, and Ser153; these read TDE, LE, and RGGS. Residues 173–174, 179–184, and Arg209 contribute to the ATP site; these read TD and YTTDPH. ACT domains follow at residues 263-342 and 344-405; these read IGLI…IAKV and IVGV…LDKA. Residues Asp270, 288–290, Gln294, 355–356, 369–370, and 376–377 each bind substrate; these read AVD, VP, NI, and SE.

This sequence belongs to the aspartokinase family. Tetramer consisting of 2 isoforms Alpha (catalytic and regulation) and of a homodimer of 2 isoforms Beta (regulation).

It carries out the reaction L-aspartate + ATP = 4-phospho-L-aspartate + ADP. It participates in amino-acid biosynthesis; L-lysine biosynthesis via DAP pathway; (S)-tetrahydrodipicolinate from L-aspartate: step 1/4. Its pathway is amino-acid biosynthesis; L-methionine biosynthesis via de novo pathway; L-homoserine from L-aspartate: step 1/3. It functions in the pathway amino-acid biosynthesis; L-threonine biosynthesis; L-threonine from L-aspartate: step 1/5. Catalyzes the phosphorylation of the beta-carboxyl group of aspartic acid with ATP to yield 4-phospho-L-aspartate, which is involved in the branched biosynthetic pathway leading to the biosynthesis of amino acids lysine, threonine, isoleucine and methionine. The chain is Aspartokinase (ask) from Thermus thermophilus (strain ATCC BAA-163 / DSM 7039 / HB27).